Here is a 391-residue protein sequence, read N- to C-terminus: MFGSATRSDATRVLLLGSGELGKEVAIECQRLGLEVIAVDRYDNAPAMQVAHRSHVIDMLDGDALRKLIELEQPHYVVPEIEAIATDTLVSLEAEGVNIVPTANATKLTMNREGIRRLAAEDLQIPTSPFEFADQYDDFVAAVERVGTPCVVKPIMSSSGKGQSVIKTPADIEASWQYAQEGGRAGTGRVVVEGFIKFDYEITLLTTRAVDGIHFCAPIGHRQEEGDYRESWQPQQMSDEALKAAQDVAEKVVNALGGYGLFGVELFVRGNEVLFNEVSPRPHDTGMVTLISQDLSEFALHVRAFLGLPIQQIIQYGPAASAVILGNGISSNIRFDNLTAALSRPQTQVRLFGKPEINGRRRLGVALTRREDTKQAVSDAINAAADVKVIY.

N(1)-(5-phospho-beta-D-ribosyl)glycinamide contacts are provided by residues 20-21 and E80; that span reads EL. Residues R112, K153, 158 to 163, 193 to 196, and E201 each bind ATP; these read SSGKGQ and EGFI. The ATP-grasp domain maps to 117–306; it reads RLAAEDLQIP…EFALHVRAFL (190 aa). Positions 265 and 277 each coordinate Mg(2+). Residues D284, K354, and 361 to 362 contribute to the N(1)-(5-phospho-beta-D-ribosyl)glycinamide site; that span reads RR.

It belongs to the PurK/PurT family. As to quaternary structure, homodimer.

The enzyme catalyses N(1)-(5-phospho-beta-D-ribosyl)glycinamide + formate + ATP = N(2)-formyl-N(1)-(5-phospho-beta-D-ribosyl)glycinamide + ADP + phosphate + H(+). It participates in purine metabolism; IMP biosynthesis via de novo pathway; N(2)-formyl-N(1)-(5-phospho-D-ribosyl)glycinamide from N(1)-(5-phospho-D-ribosyl)glycinamide (formate route): step 1/1. Functionally, involved in the de novo purine biosynthesis. Catalyzes the transfer of formate to 5-phospho-ribosyl-glycinamide (GAR), producing 5-phospho-ribosyl-N-formylglycinamide (FGAR). Formate is provided by PurU via hydrolysis of 10-formyl-tetrahydrofolate. This is Formate-dependent phosphoribosylglycinamide formyltransferase from Photobacterium profundum (strain SS9).